Reading from the N-terminus, the 187-residue chain is MATSNDIKNGTILKLDGNLWQTIEFQHVKPGKGGAFVRTKLRNVTSGKVVDKTFNAGAKIETATVDRSEYQYLYQDGDDYVFMDNSTYDQITVPGVVVGDAANFMLENQNVTVAIHEGAPLYIEMPPSVVLEITYTEPGLQGDRSTGGTKPATVETGYQIQVPLFLEQGTKVKVDTRTGDYLGRVNE.

The protein belongs to the elongation factor P family.

The protein localises to the cytoplasm. The protein operates within protein biosynthesis; polypeptide chain elongation. Functionally, involved in peptide bond synthesis. Stimulates efficient translation and peptide-bond synthesis on native or reconstituted 70S ribosomes in vitro. Probably functions indirectly by altering the affinity of the ribosome for aminoacyl-tRNA, thus increasing their reactivity as acceptors for peptidyl transferase. This is Elongation factor P from Kocuria rhizophila (strain ATCC 9341 / DSM 348 / NBRC 103217 / DC2201).